We begin with the raw amino-acid sequence, 169 residues long: Hydroperoxy fatty acid reductase gpx1 (169 aa).

Residue Cys-41 is part of the active site.

This sequence belongs to the glutathione peroxidase family. Monomer.

The catalysed reaction is a hydroperoxy polyunsaturated fatty acid + NADPH + H(+) = a hydroxy polyunsaturated fatty acid + NADP(+) + H2O. Its activity is regulated as follows. Mercaptosuccinate, pCMB, and nethylmaleimide act as inhibitors of the catalytic activity. Its function is as follows. Hydroperoxy fatty acid reductase essential for the removal of lipid hydroperoxides under normal and stress conditions, leading to the protection of membrane integrity. The sequence is that of Hydroperoxy fatty acid reductase gpx1 (gpx1) from Synechocystis sp. (strain ATCC 27184 / PCC 6803 / Kazusa).